A 783-amino-acid polypeptide reads, in one-letter code: Endonuclease MutS2 (783 aa).

ATP is bound at residue 337–344 (GPNTGGKT). A Smr domain is found at 708-783 (LHLRGYRYEE…GFGVTVAELK (76 aa)).

Belongs to the DNA mismatch repair MutS family. MutS2 subfamily. Homodimer. Binds to stalled ribosomes, contacting rRNA.

Endonuclease that is involved in the suppression of homologous recombination and thus may have a key role in the control of bacterial genetic diversity. Its function is as follows. Acts as a ribosome collision sensor, splitting the ribosome into its 2 subunits. Detects stalled/collided 70S ribosomes which it binds and splits by an ATP-hydrolysis driven conformational change. Acts upstream of the ribosome quality control system (RQC), a ribosome-associated complex that mediates the extraction of incompletely synthesized nascent chains from stalled ribosomes and their subsequent degradation. Probably generates substrates for RQC. This chain is Endonuclease MutS2, found in Staphylococcus haemolyticus (strain JCSC1435).